A 141-amino-acid polypeptide reads, in one-letter code: UPF0225 protein Rmet_0111 (141 aa).

The protein belongs to the UPF0225 family.

In Cupriavidus metallidurans (strain ATCC 43123 / DSM 2839 / NBRC 102507 / CH34) (Ralstonia metallidurans), this protein is UPF0225 protein Rmet_0111.